The chain runs to 79 residues: Cytochrome c oxidase assembly factor 6 homolog (79 aa).

The CHCH domain maps to 9 to 52; the sequence is RQACWGARDLYWRCLDDNAEDAARCQKLRSSFEASCPQQWIKYF. Residues 12–22 carry the Cx9C motif motif; it reads CWGARDLYWRC. Cystine bridges form between Cys-12-Cys-44 and Cys-22-Cys-33. The Cx10C motif signature appears at 33–44; the sequence is CQKLRSSFEASC.

The protein belongs to the cytochrome c oxidase subunit 6B family. As to quaternary structure, found in a complex with TMEM177, COX20, MT-CO2/COX2, COX18, SCO1 and SCO2. Interacts with COA1, MT-CO2/COX2, SCO1, SCO2 and COX20. Interacts with COX20 in a MT-CO2/COX2- and COX18-dependent manner. Interacts with COX16.

It is found in the mitochondrion. The protein localises to the mitochondrion intermembrane space. Involved in the maturation of the mitochondrial respiratory chain complex IV subunit MT-CO2/COX2. Thereby, may regulate early steps of complex IV assembly. Mitochondrial respiratory chain complex IV or cytochrome c oxidase is the component of the respiratory chain that catalyzes the transfer of electrons from intermembrane space cytochrome c to molecular oxygen in the matrix and as a consequence contributes to the proton gradient involved in mitochondrial ATP synthesis. May also be required for efficient formation of respiratory supercomplexes comprised of complexes III and IV. The sequence is that of Cytochrome c oxidase assembly factor 6 homolog (Coa6) from Mus musculus (Mouse).